A 381-amino-acid chain; its full sequence is Phenylalanine dehydrogenase (381 aa).

An NAD(+)-binding site is contributed by Arg55. Lys79 is an L-phenylalanine binding site. Lys91 is an active-site residue. NAD(+) contacts are provided by residues Asp126, Ser157, Thr161, 191-197 (GLGKVGY), 214-215 (DI), 254-255 (AM), and 275-277 (SAN). Asn277 provides a ligand contact to L-phenylalanine.

Belongs to the Glu/Leu/Phe/Val dehydrogenases family.

It catalyses the reaction L-phenylalanine + NAD(+) + H2O = 3-phenylpyruvate + NH4(+) + NADH + H(+). The protein operates within amino-acid biosynthesis; L-phenylalanine biosynthesis; L-phenylalanine from phenylpyruvate (PDH route): step 1/1. Functionally, catalyzes the reversible NAD(+)-dependent oxidative deamination of L-phenylalanine to phenylpyruvate. The protein is Phenylalanine dehydrogenase of Lysinibacillus sphaericus (Bacillus sphaericus).